Reading from the N-terminus, the 141-residue chain is MAKKVIKVVKLQIPAGKANPAPPVGPALGQAGVNIMAFCKEFNARTADQAGLIIPVEITVFEDRSFTFITKTPPAAVLLKKAAGIESGSGEPNRNKVATIKRDKVREIAEMKMPDLNAASIEAAMRMVEGTARSMGIVIED.

It belongs to the universal ribosomal protein uL11 family. Part of the ribosomal stalk of the 50S ribosomal subunit. Interacts with L10 and the large rRNA to form the base of the stalk. L10 forms an elongated spine to which L12 dimers bind in a sequential fashion forming a multimeric L10(L12)X complex. Post-translationally, one or more lysine residues are methylated.

Functionally, forms part of the ribosomal stalk which helps the ribosome interact with GTP-bound translation factors. This chain is Large ribosomal subunit protein uL11, found in Geobacillus sp. (strain WCH70).